The primary structure comprises 659 residues: Putative cysteine-rich receptor-like protein kinase 39 (659 aa).

A signal peptide spans 1 to 27; it reads MGKYSVLMIFIASSLLIVLQNVEIVNA. 2 consecutive Gnk2-homologous domains span residues 28 to 134 and 142 to 253; these read VGCT…NHST and PSVR…LYAF. The Extracellular segment spans residues 28–289; sequence VGCTGSFFNG…KKKGRSIGYG (262 aa). N-linked (GlcNAc...) asparagine glycosylation is found at N38, N64, N122, N131, N157, N170, N259, and N274. Residues 290–310 form a helical membrane-spanning segment; the sequence is GIIAIVVVLTFINILVFIGYI. Topologically, residues 311 to 659 are cytoplasmic; sequence KVYGRRKESY…DDVFTELSCR (349 aa). Positions 353 to 619 constitute a Protein kinase domain; it reads FSSENTLGQG…PTMSSVIIWL (267 aa). ATP contacts are provided by residues 359-367 and K381; that span reads LGQGGFGTV. Position 426 is a phosphotyrosine (Y426). The active-site Proton acceptor is the D478. S482 is subject to Phosphoserine. Phosphothreonine is present on T518. At Y526 the chain carries Phosphotyrosine.

Belongs to the protein kinase superfamily. Ser/Thr protein kinase family. CRK subfamily.

It localises to the membrane. It carries out the reaction L-seryl-[protein] + ATP = O-phospho-L-seryl-[protein] + ADP + H(+). The catalysed reaction is L-threonyl-[protein] + ATP = O-phospho-L-threonyl-[protein] + ADP + H(+). The polypeptide is Putative cysteine-rich receptor-like protein kinase 39 (CRK39) (Arabidopsis thaliana (Mouse-ear cress)).